Here is a 235-residue protein sequence, read N- to C-terminus: Probable transglycosylase SceD (235 aa).

The signal sequence occupies residues 1–26 (MKKTIIASSLAVGLGVVAGNAGHADA). Residues 90–159 (QQDVSAQAST…NASSGSSVNV (70 aa)) are disordered. The span at 99–110 (TVSNQTSAEQVG) shows a compositional bias: polar residues. Low complexity predominate over residues 111 to 159 (SQQQSSQAQPTQTQQAPQTEQTQQPQTEATTSNSSSSNNNASSGSSVNV).

The protein belongs to the transglycosylase family. SceD subfamily.

It localises to the secreted. In terms of biological role, is able to cleave peptidoglycan and affects clumping and separation of bacterial cells. This is Probable transglycosylase SceD (sceD) from Staphylococcus haemolyticus (strain JCSC1435).